The primary structure comprises 770 residues: Capsid protein (770 aa).

Residues 647-656 (MQQQPTTTDI) are compositionally biased toward polar residues. Disordered regions lie at residues 647–678 (MQQQ…QEGE) and 697–717 (WEDS…TQTV). Basic and acidic residues predominate over residues 666-678 (RDTEVYHSSQEGE). The span at 703–717 (EESGSQSSEEETQTV) shows a compositional bias: low complexity.

The protein belongs to the anelloviridae capsid protein family.

The protein resides in the virion. Functionally, self assemble to form an icosahedral capsid. The protein is Capsid protein of Torque teno virus (isolate Human/Japan/TRM1/1999) (TTV).